The primary structure comprises 317 residues: Melanocyte-stimulating hormone receptor (317 aa).

Over 1–37 (MPVQGSQRRLLGSLNSTPTATPRLGLAANQTGARCLE) the chain is Extracellular. An N-linked (GlcNAc...) asparagine glycan is attached at asparagine 29. The chain crosses the membrane as a helical span at residues 38 to 63 (VSIPDGLFLSLGLVSLVENVLVVVAI). The Cytoplasmic segment spans residues 64-72 (ARNRNLHSP). Residues 73–93 (MYCFICCLALSDLLVSGSNML) traverse the membrane as a helical segment. At 94 to 118 (ETAVILLLEAGALAARAAVVQQLDN) the chain is on the extracellular side. The helical transmembrane segment at 119-140 (VIDVITCSSMLSSLCFLGAIAV) threads the bilayer. Residues 141-163 (DRYISIFYALRYHSIVTLRRARR) are Cytoplasmic-facing. The chain crosses the membrane as a helical span at residues 164–183 (VVAAIWVASVLFSTLFIAYC). Over 184 to 191 (DHAAVLLS) the chain is Extracellular. Residues 192-211 (LVVFFLAMLVLMAVLYVHML) traverse the membrane as a helical segment. Over 212 to 240 (ARACQHAQGIAQLHKRQRPAHQGVGLKGA) the chain is Cytoplasmic. A helical membrane pass occupies residues 241-266 (ATLTILLGIFFLCWGPFFLHLTLIVL). The Extracellular segment spans residues 267–279 (CPQHPTCSCIFKN). The helical transmembrane segment at 280 to 300 (FNLFLTLIICNAIIDPLIYAF) threads the bilayer. At 301–317 (RSQELRRTLKKVLLCSW) the chain is on the cytoplasmic side. Cysteine 315 carries S-palmitoyl cysteine lipidation.

Belongs to the G-protein coupled receptor 1 family. Interacts with MGRN1, but does not undergo MGRN1-mediated ubiquitination; this interaction competes with GNAS-binding and thus inhibits agonist-induced cAMP production. Interacts with OPN3; the interaction results in a decrease in MC1R-mediated cAMP signaling and ultimately a decrease in melanin production in melanocytes.

Its subcellular location is the cell membrane. In terms of biological role, receptor for MSH (alpha, beta and gamma) and ACTH. The activity of this receptor is mediated by G proteins which activate adenylate cyclase. Mediates melanogenesis, the production of eumelanin (black/brown) and phaeomelanin (red/yellow), via regulation of cAMP signaling in melanocytes. In Trachypithecus auratus (Javan langur), this protein is Melanocyte-stimulating hormone receptor (MC1R).